A 696-amino-acid polypeptide reads, in one-letter code: DNA-directed RNA polymerase subunit beta N-terminal section (696 aa).

It belongs to the RNA polymerase beta chain family. As to quaternary structure, in plastids the minimal PEP RNA polymerase catalytic core is composed of four subunits: alpha, beta, beta', and beta''. When a (nuclear-encoded) sigma factor is associated with the core the holoenzyme is formed, which can initiate transcription.

The protein resides in the plastid. The protein localises to the chloroplast. It catalyses the reaction RNA(n) + a ribonucleoside 5'-triphosphate = RNA(n+1) + diphosphate. Its function is as follows. DNA-dependent RNA polymerase catalyzes the transcription of DNA into RNA using the four ribonucleoside triphosphates as substrates. In Stigeoclonium helveticum (Green alga), this protein is DNA-directed RNA polymerase subunit beta N-terminal section (rpoB1).